The following is a 114-amino-acid chain: Large ribosomal subunit protein uL22 (114 aa).

It belongs to the universal ribosomal protein uL22 family. In terms of assembly, part of the 50S ribosomal subunit.

This protein binds specifically to 23S rRNA; its binding is stimulated by other ribosomal proteins, e.g. L4, L17, and L20. It is important during the early stages of 50S assembly. It makes multiple contacts with different domains of the 23S rRNA in the assembled 50S subunit and ribosome. Its function is as follows. The globular domain of the protein is located near the polypeptide exit tunnel on the outside of the subunit, while an extended beta-hairpin is found that lines the wall of the exit tunnel in the center of the 70S ribosome. The chain is Large ribosomal subunit protein uL22 from Ehrlichia canis (strain Jake).